The following is a 186-amino-acid chain: ATP synthase subunit delta (186 aa).

This sequence belongs to the ATPase delta chain family. As to quaternary structure, F-type ATPases have 2 components, F(1) - the catalytic core - and F(0) - the membrane proton channel. F(1) has five subunits: alpha(3), beta(3), gamma(1), delta(1), epsilon(1). F(0) has three main subunits: a(1), b(2) and c(10-14). The alpha and beta chains form an alternating ring which encloses part of the gamma chain. F(1) is attached to F(0) by a central stalk formed by the gamma and epsilon chains, while a peripheral stalk is formed by the delta and b chains.

The protein localises to the cell membrane. Its function is as follows. F(1)F(0) ATP synthase produces ATP from ADP in the presence of a proton or sodium gradient. F-type ATPases consist of two structural domains, F(1) containing the extramembraneous catalytic core and F(0) containing the membrane proton channel, linked together by a central stalk and a peripheral stalk. During catalysis, ATP synthesis in the catalytic domain of F(1) is coupled via a rotary mechanism of the central stalk subunits to proton translocation. In terms of biological role, this protein is part of the stalk that links CF(0) to CF(1). It either transmits conformational changes from CF(0) to CF(1) or is implicated in proton conduction. This chain is ATP synthase subunit delta, found in Symbiobacterium thermophilum (strain DSM 24528 / JCM 14929 / IAM 14863 / T).